The chain runs to 756 residues: Lysyl oxidase homolog 4 (756 aa).

Residues 1–24 (MAWSPPATLFLFLLLLGQPPPSRP) form the signal peptide. 4 SRCR domains span residues 32 to 133 (LRLV…VICH), 159 to 287 (VRLK…VSCV), 311 to 411 (VRLR…VRCN), and 421 to 529 (VRLA…VSCM). 17 cysteine pairs are disulfide-bonded: Cys-58–Cys-122, Cys-71–Cys-132, Cys-102–Cys-112, Cys-191–Cys-276, Cys-204–Cys-286, Cys-251–Cys-261, Cys-336–Cys-400, Cys-349–Cys-410, Cys-380–Cys-390, Cys-450–Cys-515, Cys-463–Cys-528, Cys-497–Cys-507, Cys-558–Cys-564, Cys-610–Cys-658, Cys-642–Cys-648, Cys-670–Cys-680, and Cys-717–Cys-731. The N-linked (GlcNAc...) asparagine glycan is linked to Asn-198. Residues 533–736 (PDLVMNAQLV…WLHNCHTGNS (204 aa)) form a lysyl-oxidase like region. Cu cation is bound by residues His-611, His-613, and His-615. A glycan (N-linked (GlcNAc...) asparagine) is linked at Asn-629. Residues 638–674 (KASFCLEDTNCPTGLQRRYACANFGEQGVTVGCWDTY) constitute a cross-link (lysine tyrosylquinone (Lys-Tyr)). Tyr-674 is subject to 2',4',5'-topaquinone.

This sequence belongs to the lysyl oxidase family. Requires Cu cation as cofactor. Lysine tyrosylquinone residue is required as a cofactor. Post-translationally, the lysine tyrosylquinone cross-link (LTQ) is generated by condensation of the epsilon-amino group of a lysine with a topaquinone produced by oxidation of tyrosine. In terms of processing, may be proteolytically cleaved by BMP1. As to expression, expressed in many tissues, the highest levels among the tissues studied being in the skeletal muscle, testis and pancreas. Expressed in cartilage.

Its subcellular location is the secreted. It is found in the extracellular space. The catalysed reaction is L-lysyl-[protein] + O2 + H2O = (S)-2-amino-6-oxohexanoyl-[protein] + H2O2 + NH4(+). Inhibited by beta-aminopropionitrile (BAPN). In terms of biological role, catalyzes the oxidative deamination of lysine and hydroxylysine residues in collagen and elastin, resulting in the formation of covalent cross-linkages, and the stabilization of collagen and elastin fibers. This is Lysyl oxidase homolog 4 (LOXL4) from Homo sapiens (Human).